Here is a 227-residue protein sequence, read N- to C-terminus: Uracil-DNA glycosylase (227 aa).

Residue D65 is the Proton acceptor of the active site.

This sequence belongs to the uracil-DNA glycosylase (UDG) superfamily. UNG family.

The protein localises to the cytoplasm. It catalyses the reaction Hydrolyzes single-stranded DNA or mismatched double-stranded DNA and polynucleotides, releasing free uracil.. In terms of biological role, excises uracil residues from the DNA which can arise as a result of misincorporation of dUMP residues by DNA polymerase or due to deamination of cytosine. This chain is Uracil-DNA glycosylase, found in Lactobacillus delbrueckii subsp. bulgaricus (strain ATCC BAA-365 / Lb-18).